A 454-amino-acid polypeptide reads, in one-letter code: Flavonoid 3-O-glucosyltransferase (454 aa).

Threonine 25 provides a ligand contact to UDP. Catalysis depends on histidine 26, which acts as the Proton acceptor. Arginine 89 provides a ligand contact to myricetin. Catalysis depends on aspartate 124, which acts as the Charge relay. Histidine 155, glutamate 192, and phenylalanine 202 together coordinate myricetin. Serine 282, serine 308, tryptophan 334, and alanine 335 together coordinate UDP. 7 residues coordinate UDP-alpha-D-glucose: alanine 335, glutamine 337, histidine 352, tryptophan 355, asparagine 356, serine 357, and glutamate 360. A UDP-binding site is contributed by histidine 352. UDP-binding residues include asparagine 356, serine 357, and glutamate 360. Glycine 375 is a binding site for myricetin. UDP-alpha-D-glucose-binding residues include aspartate 376 and glutamine 377.

Belongs to the UDP-glycosyltransferase family. Highly expressed in flower buds, flowers and pods. Lower expression in leaves, petioles and stems.

Its pathway is secondary metabolite biosynthesis; flavonoid biosynthesis. Catalyzes the glycosylation of flavonoids at the 3-O-position. Glycosylates the 7-O-position if the 3-O-position is not available. Also able to perform 3-O-glycosylation of anthocyanidins. The polypeptide is Flavonoid 3-O-glucosyltransferase (UGT78G1) (Medicago truncatula (Barrel medic)).